Reading from the N-terminus, the 105-residue chain is Tyrosine-protein phosphatase 12 (105 aa).

The Tyrosine-protein phosphatase domain occupies W1 to F105. D84 provides a ligand contact to substrate.

It belongs to the protein-tyrosine phosphatase family.

The enzyme catalyses O-phospho-L-tyrosyl-[protein] + H2O = L-tyrosyl-[protein] + phosphate. The sequence is that of Tyrosine-protein phosphatase 12 (STY-12) from Styela plicata (Wrinkled sea squirt).